Reading from the N-terminus, the 361-residue chain is Phospho-N-acetylmuramoyl-pentapeptide-transferase (361 aa).

10 consecutive transmembrane segments (helical) span residues 25 to 45, 72 to 92, 95 to 115, 133 to 153, 169 to 189, 200 to 220, 240 to 260, 264 to 284, 289 to 309, and 338 to 358; these read TGGA…WIIN, TPTM…VLWA, VNPY…VGFY, TRLL…VWLG, VVLN…VGAG, GLAI…AYLA, LAVL…FNAP, IFMG…IAVA, IVLA…IVQV, and QIVI…LATL.

It belongs to the glycosyltransferase 4 family. MraY subfamily. Requires Mg(2+) as cofactor.

It is found in the cell inner membrane. The enzyme catalyses UDP-N-acetyl-alpha-D-muramoyl-L-alanyl-gamma-D-glutamyl-meso-2,6-diaminopimeloyl-D-alanyl-D-alanine + di-trans,octa-cis-undecaprenyl phosphate = di-trans,octa-cis-undecaprenyl diphospho-N-acetyl-alpha-D-muramoyl-L-alanyl-D-glutamyl-meso-2,6-diaminopimeloyl-D-alanyl-D-alanine + UMP. Its pathway is cell wall biogenesis; peptidoglycan biosynthesis. Catalyzes the initial step of the lipid cycle reactions in the biosynthesis of the cell wall peptidoglycan: transfers peptidoglycan precursor phospho-MurNAc-pentapeptide from UDP-MurNAc-pentapeptide onto the lipid carrier undecaprenyl phosphate, yielding undecaprenyl-pyrophosphoryl-MurNAc-pentapeptide, known as lipid I. This chain is Phospho-N-acetylmuramoyl-pentapeptide-transferase, found in Rhodopseudomonas palustris (strain BisB5).